The following is a 332-amino-acid chain: L-lactate dehydrogenase A chain (332 aa).

NAD(+)-binding positions include 29–57 and Arg-99; that span reads GAVG…MEDK. Arg-106, Asn-138, and Arg-169 together coordinate substrate. Asn-138 contributes to the NAD(+) binding site. His-193 serves as the catalytic Proton acceptor. Thr-248 contributes to the substrate binding site.

Belongs to the LDH/MDH superfamily. LDH family. In terms of assembly, homotetramer.

Its subcellular location is the cytoplasm. It carries out the reaction (S)-lactate + NAD(+) = pyruvate + NADH + H(+). It participates in fermentation; pyruvate fermentation to lactate; (S)-lactate from pyruvate: step 1/1. In terms of biological role, interconverts simultaneously and stereospecifically pyruvate and lactate with concomitant interconversion of NADH and NAD(+). The polypeptide is L-lactate dehydrogenase A chain (LDHA) (Sceloporus undulatus (Eastern fence lizard)).